We begin with the raw amino-acid sequence, 66 residues long: Large ribosomal subunit protein bL35 (66 aa).

The segment covering 1 to 16 (MPKQKTHRASAKRFKR) has biased composition (basic residues). The segment at 1-20 (MPKQKTHRASAKRFKRTGSG) is disordered.

It belongs to the bacterial ribosomal protein bL35 family.

In Streptococcus thermophilus (strain ATCC BAA-250 / LMG 18311), this protein is Large ribosomal subunit protein bL35.